Here is a 71-residue protein sequence, read N- to C-terminus: uncharacterized protein (71 aa).

A disordered region spans residues 23–71; that stretch reads ENEKAGQSEEYDDDDKEENKKRRRNNGRRGPPEKKKSRRGGEEQTQRII. Basic and acidic residues predominate over residues 52–71; sequence GPPEKKKSRRGGEEQTQRII.

This is an uncharacterized protein from Caenorhabditis elegans.